Here is a 388-residue protein sequence, read N- to C-terminus: Succinate--CoA ligase [ADP-forming] subunit beta (388 aa).

The 236-residue stretch at 9–244 (KQLFARYGLP…PSQEDPREAQ (236 aa)) folds into the ATP-grasp domain. ATP contacts are provided by residues Lys46, 53 to 55 (GRG), Glu99, Thr102, and Glu107. Asn199 and Asp213 together coordinate Mg(2+). Substrate-binding positions include Asn264 and 321-323 (GIV).

This sequence belongs to the succinate/malate CoA ligase beta subunit family. As to quaternary structure, heterotetramer of two alpha and two beta subunits. Mg(2+) is required as a cofactor.

It catalyses the reaction succinate + ATP + CoA = succinyl-CoA + ADP + phosphate. It carries out the reaction GTP + succinate + CoA = succinyl-CoA + GDP + phosphate. It participates in carbohydrate metabolism; tricarboxylic acid cycle; succinate from succinyl-CoA (ligase route): step 1/1. In terms of biological role, succinyl-CoA synthetase functions in the citric acid cycle (TCA), coupling the hydrolysis of succinyl-CoA to the synthesis of either ATP or GTP and thus represents the only step of substrate-level phosphorylation in the TCA. The beta subunit provides nucleotide specificity of the enzyme and binds the substrate succinate, while the binding sites for coenzyme A and phosphate are found in the alpha subunit. In Photorhabdus laumondii subsp. laumondii (strain DSM 15139 / CIP 105565 / TT01) (Photorhabdus luminescens subsp. laumondii), this protein is Succinate--CoA ligase [ADP-forming] subunit beta.